We begin with the raw amino-acid sequence, 532 residues long: Light-independent protochlorophyllide reductase subunit B (532 aa).

[4Fe-4S] cluster is bound at residue D36. The active-site Proton donor is D318. 453-454 is a substrate binding site; that stretch reads GM.

This sequence belongs to the ChlB/BchB/BchZ family. Protochlorophyllide reductase is composed of three subunits; ChlL, ChlN and ChlB. Forms a heterotetramer of two ChlB and two ChlN subunits. [4Fe-4S] cluster is required as a cofactor.

The protein localises to the plastid. The protein resides in the chloroplast. It catalyses the reaction chlorophyllide a + oxidized 2[4Fe-4S]-[ferredoxin] + 2 ADP + 2 phosphate = protochlorophyllide a + reduced 2[4Fe-4S]-[ferredoxin] + 2 ATP + 2 H2O. Its pathway is porphyrin-containing compound metabolism; chlorophyll biosynthesis (light-independent). Functionally, component of the dark-operative protochlorophyllide reductase (DPOR) that uses Mg-ATP and reduced ferredoxin to reduce ring D of protochlorophyllide (Pchlide) to form chlorophyllide a (Chlide). This reaction is light-independent. The NB-protein (ChlN-ChlB) is the catalytic component of the complex. This Tetradesmus obliquus (Green alga) protein is Light-independent protochlorophyllide reductase subunit B.